We begin with the raw amino-acid sequence, 219 residues long: Hemolysin-3 (219 aa).

A run of 7 helical transmembrane segments spans residues 19 to 39 (AITH…LIIH), 49 to 69 (VVAF…STLL), 83 to 103 (ILDH…FLLI), 112 to 132 (TLLA…IFFV), 138 to 158 (ASTL…KPLY), 165 to 185 (GFSL…FFLW), and 194 to 214 (IWHL…LFYV).

The protein belongs to the UPF0073 (Hly-III) family.

The protein localises to the cell membrane. Might be virulent against a mammalian host; when expressed in E.coli, the soluble extract has hemolytic activity on human erythrocytes. The activity is not inhibited by cholesterol or activated by 2-mercaptoethanol. Might be pore-forming protein. Its in vivo role in virulence is untested, nor has it been shown to be secreted by B.cereus. This is Hemolysin-3 from Bacillus cereus.